The sequence spans 378 residues: Quinolinate synthase (378 aa).

2 residues coordinate iminosuccinate: H59 and S80. C125 contacts [4Fe-4S] cluster. Iminosuccinate is bound by residues 151 to 153 and S168; that span reads YAN. C212 provides a ligand contact to [4Fe-4S] cluster. Residues 238-240 and T255 each bind iminosuccinate; that span reads HPE. C309 contributes to the [4Fe-4S] cluster binding site.

It belongs to the quinolinate synthase family. Type 1 subfamily. [4Fe-4S] cluster serves as cofactor.

It localises to the cytoplasm. The enzyme catalyses iminosuccinate + dihydroxyacetone phosphate = quinolinate + phosphate + 2 H2O + H(+). The protein operates within cofactor biosynthesis; NAD(+) biosynthesis; quinolinate from iminoaspartate: step 1/1. Its function is as follows. Catalyzes the condensation of iminoaspartate with dihydroxyacetone phosphate to form quinolinate. In Burkholderia cenocepacia (strain HI2424), this protein is Quinolinate synthase.